Reading from the N-terminus, the 139-residue chain is Ribosome maturation factor RimP (139 aa).

Belongs to the RimP family.

The protein resides in the cytoplasm. Its function is as follows. Required for maturation of 30S ribosomal subunits. The polypeptide is Ribosome maturation factor RimP (Syntrophomonas wolfei subsp. wolfei (strain DSM 2245B / Goettingen)).